Here is a 102-residue protein sequence, read N- to C-terminus: 10 kDa heat shock protein, mitochondrial (102 aa).

The protein belongs to the GroES chaperonin family. As to quaternary structure, homohexamer.

It localises to the mitochondrion matrix. In terms of biological role, eukaryotic CPN10 homolog which is essential for mitochondrial protein biogenesis, together with CPN60. Binds to CPN60 in the presence of Mg-ATP and suppresses the ATPase activity of the latter. This is 10 kDa heat shock protein, mitochondrial from Schistosoma japonicum (Blood fluke).